The chain runs to 278 residues: Ribosomal RNA small subunit methyltransferase A (278 aa).

S-adenosyl-L-methionine is bound by residues N28, L30, G55, E77, D103, and N122.

The protein belongs to the class I-like SAM-binding methyltransferase superfamily. rRNA adenine N(6)-methyltransferase family. RsmA subfamily.

It localises to the cytoplasm. It carries out the reaction adenosine(1518)/adenosine(1519) in 16S rRNA + 4 S-adenosyl-L-methionine = N(6)-dimethyladenosine(1518)/N(6)-dimethyladenosine(1519) in 16S rRNA + 4 S-adenosyl-L-homocysteine + 4 H(+). Its function is as follows. Specifically dimethylates two adjacent adenosines (A1518 and A1519) in the loop of a conserved hairpin near the 3'-end of 16S rRNA in the 30S particle. May play a critical role in biogenesis of 30S subunits. This Cereibacter sphaeroides (strain ATCC 17025 / ATH 2.4.3) (Rhodobacter sphaeroides) protein is Ribosomal RNA small subunit methyltransferase A.